Reading from the N-terminus, the 467-residue chain is Membrane-bound acylglycerophosphatidylinositol O-acyltransferase mboat7 (467 aa).

The Cytoplasmic portion of the chain corresponds to Met-1–Glu-5. The chain crosses the membrane as a helical span at residues Leu-6–Phe-22. The Lumenal portion of the chain corresponds to Arg-23–Ala-33. The chain crosses the membrane as a helical span at residues Ala-34 to Val-57. Topologically, residues Leu-58–Ala-73 are cytoplasmic. A helical membrane pass occupies residues Leu-74–Gly-93. The Lumenal segment spans residues Leu-94–Arg-193. A helical membrane pass occupies residues Leu-194 to Phe-211. The Cytoplasmic portion of the chain corresponds to Pro-212–Phe-230. The helical transmembrane segment at Phe-231–Leu-260 threads the bilayer. The Lumenal segment spans residues Gly-261–Trp-421. Residue Asn-316 is glycosylated (N-linked (GlcNAc...) asparagine). A helical membrane pass occupies residues Ser-422–Met-442. Residues Lys-443–Glu-467 lie on the Cytoplasmic side of the membrane. A disordered region spans residues Lys-447–Glu-467. Over residues Arg-451–Glu-467 the composition is skewed to basic and acidic residues.

The protein belongs to the membrane-bound acyltransferase family.

The protein resides in the endoplasmic reticulum membrane. The enzyme catalyses a 1-acyl-sn-glycero-3-phospho-(1D-myo-inositol) + (5Z,8Z,11Z,14Z)-eicosatetraenoyl-CoA = a 1-acyl-2-(5Z,8Z,11Z,14Z-eicosatetraenoyl)-sn-glycero-3-phospho-(1D-myo-inositol) + CoA. The catalysed reaction is (5Z,8Z,11Z,14Z)-eicosatetraenoyl-CoA + 1-hexadecanoyl-sn-glycero-3-phosphocholine = 1-hexadecanoyl-2-(5Z,8Z,11Z,14Z-eicosatetraenoyl)-sn-glycero-3-phosphocholine + CoA. It catalyses the reaction a 1-acyl-sn-glycero-3-phospho-(1D-myo-inositol) + an acyl-CoA = a 1,2-diacyl-sn-glycero-3-phospho-(1D-myo-inositol) + CoA. It carries out the reaction 1-octadecanoyl-sn-glycero-3-phospho-(1D-myo-inositol) + (5Z,8Z,11Z,14Z)-eicosatetraenoyl-CoA = 1-octadecanoyl-2-(5Z,8Z,11Z,14Z-eicosatetraenoyl)-sn-glycero-3-phospho-(1D-myo-inositol) + CoA. Its pathway is lipid metabolism; phospholipid metabolism. Its function is as follows. Acyltransferase which catalyzes the transfer of an acyl group from an acyl-CoA to a lysophosphatidylinositol (1-acylglycerophosphatidylinositol or LPI) leading to the production of a phosphatidylinositol (1,2-diacyl-sn-glycero-3-phosphoinositol or PI) and participates in the reacylation step of the phospholipid remodeling pathway also known as the Lands cycle. Prefers arachidonoyl-CoA as the acyl donor, thus contributing to the regulation of free levels arachidonic acid in cell. In Danio rerio (Zebrafish), this protein is Membrane-bound acylglycerophosphatidylinositol O-acyltransferase mboat7 (mboat7).